Reading from the N-terminus, the 130-residue chain is UPF0146 protein AF_0739.1 (130 aa).

It belongs to the UPF0146 family.

The chain is UPF0146 protein AF_0739.1 from Archaeoglobus fulgidus (strain ATCC 49558 / DSM 4304 / JCM 9628 / NBRC 100126 / VC-16).